A 276-amino-acid polypeptide reads, in one-letter code: Chlorophyll a-b binding protein CP29.3, chloroplastic (276 aa).

Residues 1 to 29 constitute a chloroplast transit peptide; the sequence is MATTTAAAASGIFGIRIQDPRPGTGRVQA. The tract at residues 1–53 is disordered; the sequence is MATTTAAAASGIFGIRIQDPRPGTGRVQARFGFSFGKKKPAPPPKKSRQVQDD. Residues 36–48 are compositionally biased toward basic residues; that stretch reads GKKKPAPPPKKSR. A chlorophyll b-binding site is contributed by W59. Positions 79, 141, and 144 each coordinate chlorophyll a. A helical transmembrane segment spans residues 147–167; the sequence is WAMLGTLGAIAVEALTGIAWQ. L181 contributes to the chlorophyll a binding site. A helical transmembrane segment spans residues 185 to 205; it reads LPFSLTTLIWIEVLVVGYIEF. Chlorophyll b-binding residues include E204 and R207. Chlorophyll a-binding residues include E242, H245, R247, and Q259. Residues 248–268 traverse the membrane as a helical segment; it reads LAMVAFLIFALQAAFTGKGPV.

This sequence belongs to the light-harvesting chlorophyll a/b-binding (LHC) protein family. The LHC complex consists of chlorophyll a-b binding proteins. Binds at least 14 chlorophylls (8 Chl-a and 6 Chl-b) and carotenoids such as lutein and neoxanthin. serves as cofactor. Post-translationally, photoregulated by reversible phosphorylation of its threonine residues.

The protein resides in the plastid. It localises to the chloroplast thylakoid membrane. Functionally, the light-harvesting complex (LHC) functions as a light receptor, it captures and delivers excitation energy to photosystems with which it is closely associated. This Arabidopsis thaliana (Mouse-ear cress) protein is Chlorophyll a-b binding protein CP29.3, chloroplastic (LHCB4.3).